Reading from the N-terminus, the 368-residue chain is tRNA-specific 2-thiouridylase MnmA (368 aa).

ATP-binding positions include 11 to 18 (GMSGGVDS) and methionine 37. Residues 97 to 99 (NPD) form an interaction with target base in tRNA region. The active-site Nucleophile is cysteine 102. A disulfide bond links cysteine 102 and cysteine 199. An ATP-binding site is contributed by glycine 127. Residues 149-151 (KDQ) are interaction with tRNA. The active-site Cysteine persulfide intermediate is the cysteine 199. The interval 311–312 (RY) is interaction with tRNA.

The protein belongs to the MnmA/TRMU family. In terms of assembly, interacts with TusE.

It is found in the cytoplasm. It catalyses the reaction S-sulfanyl-L-cysteinyl-[protein] + uridine(34) in tRNA + AH2 + ATP = 2-thiouridine(34) in tRNA + L-cysteinyl-[protein] + A + AMP + diphosphate + H(+). Its function is as follows. Catalyzes the 2-thiolation of uridine at the wobble position (U34) of tRNA(Lys), tRNA(Glu) and tRNA(Gln), leading to the formation of s(2)U34, the first step of tRNA-mnm(5)s(2)U34 synthesis. Sulfur is provided by IscS, via a sulfur-relay system. Binds ATP and its substrate tRNAs. The chain is tRNA-specific 2-thiouridylase MnmA from Escherichia coli O1:K1 / APEC.